The sequence spans 829 residues: Leucine--tRNA ligase (829 aa).

The short motif at 42-52 is the 'HIGH' region element; it reads PYPSGRIHMGH. The 'KMSKS' region motif lies at 584–588; sequence KMSKS. An ATP-binding site is contributed by lysine 587.

It belongs to the class-I aminoacyl-tRNA synthetase family.

Its subcellular location is the cytoplasm. It catalyses the reaction tRNA(Leu) + L-leucine + ATP = L-leucyl-tRNA(Leu) + AMP + diphosphate. This chain is Leucine--tRNA ligase, found in Syntrophobacter fumaroxidans (strain DSM 10017 / MPOB).